Reading from the N-terminus, the 364-residue chain is DNA replication and repair protein RecF (364 aa).

30 to 37 is a binding site for ATP; it reads GLNAQGKS.

It belongs to the RecF family.

It localises to the cytoplasm. In terms of biological role, the RecF protein is involved in DNA metabolism; it is required for DNA replication and normal SOS inducibility. RecF binds preferentially to single-stranded, linear DNA. It also seems to bind ATP. The polypeptide is DNA replication and repair protein RecF (Caldanaerobacter subterraneus subsp. tengcongensis (strain DSM 15242 / JCM 11007 / NBRC 100824 / MB4) (Thermoanaerobacter tengcongensis)).